The following is a 467-amino-acid chain: Cysteine--tRNA ligase (467 aa).

A Zn(2+)-binding site is contributed by cysteine 29. The 'HIGH' region motif lies at 31–41 (PTVYNYIHIGN). Zn(2+) contacts are provided by cysteine 209, histidine 234, and glutamate 238. Residues 266–270 (KMSKS) carry the 'KMSKS' region motif. Lysine 269 contributes to the ATP binding site. A Phosphoserine modification is found at serine 270.

The protein belongs to the class-I aminoacyl-tRNA synthetase family. As to quaternary structure, monomer. Zn(2+) serves as cofactor.

Its subcellular location is the cytoplasm. It catalyses the reaction tRNA(Cys) + L-cysteine + ATP = L-cysteinyl-tRNA(Cys) + AMP + diphosphate. In Bacillus licheniformis (strain ATCC 14580 / DSM 13 / JCM 2505 / CCUG 7422 / NBRC 12200 / NCIMB 9375 / NCTC 10341 / NRRL NRS-1264 / Gibson 46), this protein is Cysteine--tRNA ligase.